The following is a 341-amino-acid chain: UDP-3-O-acylglucosamine N-acyltransferase (341 aa).

Histidine 237 functions as the Proton acceptor in the catalytic mechanism.

It belongs to the transferase hexapeptide repeat family. LpxD subfamily. In terms of assembly, homotrimer.

The catalysed reaction is a UDP-3-O-[(3R)-3-hydroxyacyl]-alpha-D-glucosamine + a (3R)-hydroxyacyl-[ACP] = a UDP-2-N,3-O-bis[(3R)-3-hydroxyacyl]-alpha-D-glucosamine + holo-[ACP] + H(+). Its pathway is bacterial outer membrane biogenesis; LPS lipid A biosynthesis. Catalyzes the N-acylation of UDP-3-O-acylglucosamine using 3-hydroxyacyl-ACP as the acyl donor. Is involved in the biosynthesis of lipid A, a phosphorylated glycolipid that anchors the lipopolysaccharide to the outer membrane of the cell. This chain is UDP-3-O-acylglucosamine N-acyltransferase, found in Azoarcus sp. (strain BH72).